The sequence spans 432 residues: Trigger factor (432 aa).

In terms of domain architecture, PPIase FKBP-type spans 161–246 (EDRVTLDFTG…LKKVEERELP (86 aa)).

The protein belongs to the FKBP-type PPIase family. Tig subfamily.

The protein resides in the cytoplasm. The enzyme catalyses [protein]-peptidylproline (omega=180) = [protein]-peptidylproline (omega=0). Its function is as follows. Involved in protein export. Acts as a chaperone by maintaining the newly synthesized protein in an open conformation. Functions as a peptidyl-prolyl cis-trans isomerase. This Salmonella arizonae (strain ATCC BAA-731 / CDC346-86 / RSK2980) protein is Trigger factor.